Here is a 412-residue protein sequence, read N- to C-terminus: UPF0761 membrane protein lpg0643 (412 aa).

A run of 6 helical transmembrane segments spans residues 36-56, 99-119, 137-157, 177-197, 210-230, and 241-261; these read ALAFTSLLAVVPLMSVGLAIF, LSIWGIVFLIFTALLVMFTIE, AFLLYWAIISLAPVLLGLSLA, ILHYSPFFLSLIGFTFLYVVV, GGLVAAILFESAKHAFAYYLI, and AFATVPIFFIWVYWVWIITLL.

It belongs to the UPF0761 family.

It is found in the cell inner membrane. The chain is UPF0761 membrane protein lpg0643 from Legionella pneumophila subsp. pneumophila (strain Philadelphia 1 / ATCC 33152 / DSM 7513).